A 462-amino-acid chain; its full sequence is Tubulin alpha-4 chain (462 aa).

Residues Gln-11, Glu-82, Ser-151, Gly-155, Thr-156, Thr-190, Asn-217, and Asn-239 each coordinate GTP. Glu-82 provides a ligand contact to Mg(2+). The active site involves Glu-265.

It belongs to the tubulin family. In terms of assembly, dimer of alpha and beta chains. A typical microtubule is a hollow water-filled tube with an outer diameter of 25 nm and an inner diameter of 15 nM. Alpha-beta heterodimers associate head-to-tail to form protofilaments running lengthwise along the microtubule wall with the beta-tubulin subunit facing the microtubule plus end conferring a structural polarity. Microtubules usually have 13 protofilaments but different protofilament numbers can be found in some organisms and specialized cells. Mg(2+) is required as a cofactor.

It localises to the cytoplasm. It is found in the cytoskeleton. The enzyme catalyses GTP + H2O = GDP + phosphate + H(+). Its function is as follows. Tubulin is the major constituent of microtubules, a cylinder consisting of laterally associated linear protofilaments composed of alpha- and beta-tubulin heterodimers. Microtubules grow by the addition of GTP-tubulin dimers to the microtubule end, where a stabilizing cap forms. Below the cap, tubulin dimers are in GDP-bound state, owing to GTPase activity of alpha-tubulin. In Drosophila melanogaster (Fruit fly), this protein is Tubulin alpha-4 chain (alphaTub67C).